Consider the following 179-residue polypeptide: ATP-dependent protease subunit HslV (179 aa).

Threonine 5 is a catalytic residue. Na(+) contacts are provided by glycine 164, cysteine 167, and threonine 170.

It belongs to the peptidase T1B family. HslV subfamily. In terms of assembly, a double ring-shaped homohexamer of HslV is capped on each side by a ring-shaped HslU homohexamer. The assembly of the HslU/HslV complex is dependent on binding of ATP.

It localises to the cytoplasm. The catalysed reaction is ATP-dependent cleavage of peptide bonds with broad specificity.. With respect to regulation, allosterically activated by HslU binding. In terms of biological role, protease subunit of a proteasome-like degradation complex believed to be a general protein degrading machinery. The polypeptide is ATP-dependent protease subunit HslV (Verminephrobacter eiseniae (strain EF01-2)).